Reading from the N-terminus, the 567-residue chain is PEX5-related protein (567 aa).

A disordered region spans residues 56–105 (SEPVSQPQTKAKKSEPSSKSSSLKKKADGSDLISADAEQRAQALRGPETS). Phosphoserine is present on serine 146. The interval 150 to 169 (LWSAEHRSQPELSTGKSALN) is disordered. Phosphoserine occurs at positions 194, 198, and 202. TPR repeat units follow at residues 267–300 (WPGA…DPGD), 301–334 (AEAW…QPNN), and 336–368 (KALM…NPKY). A phosphoserine mark is found at serine 386 and serine 388. TPR repeat units follow at residues 415 to 448 (PDLQ…RPED), 450 to 482 (SLWN…QPGF), and 484 to 516 (RSRY…QRKS).

It belongs to the peroxisomal targeting signal receptor family. In terms of assembly, interacts with RAB8B. Forms an obligate 4:4 complex with HCN2. Interacts with HCN3. Interacts with HCN4 with a 4:4 HCN4:PEX5L stoichiometry; reduces the effects of cAMP on the voltage-dependence and rate of activation of HCN4.

It localises to the cytoplasm. Its subcellular location is the membrane. Its function is as follows. Accessory subunit of hyperpolarization-activated cyclic nucleotide-gated (HCN) channels, regulating their cell-surface expression and cyclic nucleotide dependence. This Mus musculus (Mouse) protein is PEX5-related protein (Pex5l).